The sequence spans 989 residues: R3H domain-containing protein 2 (989 aa).

2 disordered regions span residues 23–71 (EESV…AKSN) and 106–147 (SCPS…QEYT). The span at 36 to 56 (PSKEEIEKESEDTSLRQETQR) shows a compositional bias: basic and acidic residues. Ser37 is modified (phosphoserine). A compositionally biased stretch (basic residues) spans 58–71 (TSNHGHARKRAKSN). Residues 109-143 (SDKEEEKSTKDVSEKEDKDKNKEKVPRRMLSRDSS) show a composition bias toward basic and acidic residues. Ser143 bears the Phosphoserine mark. Positions 169-232 (RMMLLKLEQE…AVIINKTSNT (64 aa)) constitute an R3H domain. The SUZ domain occupies 233-303 (RIPEQRFSEH…VRERIFARET (71 aa)). Disordered stretches follow at residues 267-288 (DDNQIRVPLQDGRRSKSIEERE), 306-390 (NGYL…ISRP), 416-479 (TAQQ…FQPP), 493-524 (ASTGQPLPTSNYSTSSHAPPTQQVLPPQGYMQ), 674-738 (GTSP…PSMV), 751-793 (RGQK…SLSN), and 848-867 (QGQSGLKHGNRSKRQALKSA). The span at 277–288 (DGRRSKSIEERE) shows a compositional bias: basic and acidic residues. Positions 320 to 331 (SRTSSSRQSSTD) are enriched in low complexity. Phosphoserine occurs at positions 344, 347, and 363. Residues 416–428 (TAQQQQQQQQQLP) show a composition bias toward low complexity. Polar residues-rich tracts occupy residues 454 to 466 (PFGQMSLSRQGST) and 493 to 517 (ASTGQPLPTSNYSTSSHAPPTQQVL). Residues 695 to 704 (SPSPCSPPQM) show a composition bias toward pro residues. Over residues 705–727 (PQQYSGVSPSGPGVVVMQLNVPN) the composition is skewed to low complexity. Over residues 761 to 771 (PESSPQANTQM) the composition is skewed to polar residues. A compositionally biased stretch (low complexity) spans 772 to 790 (SSSPVTSPTQSPAPSPVTS). A phosphoserine mark is found at Ser866 and Ser868. Residues Thr869 and Thr873 each carry the phosphothreonine modification.

The protein localises to the nucleus. The sequence is that of R3H domain-containing protein 2 (R3HDM2) from Bos taurus (Bovine).